The following is a 138-amino-acid chain: MGIVRFGVSIPKELLEKFDGIIEEMGYTNRSEAIRDLIRDMVVRHEWQLGDEEVAGTITIVYNHDEADVVRELLDLQHEYLNEIVSSLHVHMDEHNCLEVIVVKGRAKKIKKIADRLLSLKGVKHGKLVMTTTGRDIV.

4 residues coordinate Ni(2+): H78, H89, H91, and C97.

The protein belongs to the transcriptional regulatory CopG/NikR family. The cofactor is Ni(2+).

Functionally, transcriptional regulator. The chain is Putative nickel-responsive regulator from Pyrococcus furiosus (strain ATCC 43587 / DSM 3638 / JCM 8422 / Vc1).